The sequence spans 273 residues: 4-hydroxy-tetrahydrodipicolinate reductase (273 aa).

NAD(+) is bound by residues 12 to 17 (GAGGRM) and glutamate 38. Residue arginine 39 coordinates NADP(+). NAD(+) is bound by residues 102–104 (GTT) and 126–129 (AANF). Catalysis depends on histidine 159, which acts as the Proton donor/acceptor. Histidine 160 contacts (S)-2,3,4,5-tetrahydrodipicolinate. Lysine 163 acts as the Proton donor in catalysis. 169–170 (GT) serves as a coordination point for (S)-2,3,4,5-tetrahydrodipicolinate.

It belongs to the DapB family. As to quaternary structure, homotetramer.

Its subcellular location is the cytoplasm. It catalyses the reaction (S)-2,3,4,5-tetrahydrodipicolinate + NAD(+) + H2O = (2S,4S)-4-hydroxy-2,3,4,5-tetrahydrodipicolinate + NADH + H(+). The catalysed reaction is (S)-2,3,4,5-tetrahydrodipicolinate + NADP(+) + H2O = (2S,4S)-4-hydroxy-2,3,4,5-tetrahydrodipicolinate + NADPH + H(+). The protein operates within amino-acid biosynthesis; L-lysine biosynthesis via DAP pathway; (S)-tetrahydrodipicolinate from L-aspartate: step 4/4. Catalyzes the conversion of 4-hydroxy-tetrahydrodipicolinate (HTPA) to tetrahydrodipicolinate. In Shigella sonnei (strain Ss046), this protein is 4-hydroxy-tetrahydrodipicolinate reductase.